Consider the following 141-residue polypeptide: Protein X (141 aa).

Low complexity predominate over residues 24 to 48; that stretch reads QSSGPPFPRPSAGSAASPASSLSAS. The segment at 24-51 is disordered; it reads QSSGPPFPRPSAGSAASPASSLSASDES. The segment at 68–113 is mitochondrial targeting sequence; that stretch reads PCCLVVTCAELRTMDSTVNFVSWHANRQLGMPSKDLWTPYIRDQLL.

The protein belongs to the orthohepadnavirus protein X family. May form homodimer. May interact with host CEBPA, CFLAR, CREB1, DDB1, E4F1, HBXIP, HSPD1/HSP60, NFKBIA, POLR2E and SMAD4. Interacts with host SMC5-SMC6 complex and induces its degradation. Interacts with host TRPC4AP; leading to prevent ubiquitination of TRPC4AP. Interacts with host PLSCR1; this interaction promotes ubiquitination and degradation of HBx and impairs HBx-mediated cell proliferation. A fraction may be phosphorylated in insect cells and HepG2 cells, a human hepatoblastoma cell line. Phosphorylated in vitro by host protein kinase C or mitogen-activated protein kinase. N-acetylated in insect cells.

The protein localises to the host cytoplasm. It localises to the host nucleus. The protein resides in the host mitochondrion. Functionally, multifunctional protein that plays a role in silencing host antiviral defenses and promoting viral transcription. Does not seem to be essential for HBV infection. May be directly involved in development of cirrhosis and liver cancer (hepatocellular carcinoma). Most of cytosolic activities involve modulation of cytosolic calcium. The effect on apoptosis is controversial depending on the cell types in which the studies have been conducted. May induce apoptosis by localizing in mitochondria and causing loss of mitochondrial membrane potential. May also modulate apoptosis by binding host CFLAR, a key regulator of the death-inducing signaling complex (DISC). Promotes viral transcription by using the host E3 ubiquitin ligase DDB1 to target the SMC5-SMC6 complex to proteasomal degradation. This host complex would otherwise bind to viral episomal DNA, and prevents its transcription. Moderately stimulates transcription of many different viral and cellular transcription elements. Promoters and enhancers stimulated by HBx contain DNA binding sites for NF-kappa-B, AP-1, AP-2, c-EBP, ATF/CREB, or the calcium-activated factor NF-AT. The chain is Protein X from Woodchuck hepatitis B virus (isolate 1) (WHV).